A 258-amino-acid polypeptide reads, in one-letter code: Spindlin-2B (258 aa).

Residues 1-23 (MKTPNAQEAEGQQTRAAAGRATG) show a composition bias toward low complexity. The interval 1–49 (MKTPNAQEAEGQQTRAAAGRATGSANMTKKKVSQKKQRGRPSSQPRRNI) is disordered. The segment covering 28–39 (TKKKVSQKKQRG) has biased composition (basic residues). Tudor-like domain stretches follow at residues 50–99 (VGCR…LELH), 129–178 (IGKA…YQLL), and 210–255 (IGKH…YDLV). Histone H3K4me3 and H3R8me2a binding stretches follow at residues Glu138 and 246-248 (DFH).

The protein belongs to the SPIN/STSY family. As to quaternary structure, interacts with C11orf84/SPINDOC. Detected in all the examined tissues with highest expression in liver, followed by heart, stomach, kidney, skeletal muscle, placenta, and pancreas.

The protein localises to the nucleus. Its function is as follows. Involved in the regulation of cell cycle progression, this activity is related to the inhibition of apoptosis following the removal of essential growth factors. Exhibits H3K4me3-binding activity. The sequence is that of Spindlin-2B (SPIN2B) from Homo sapiens (Human).